The chain runs to 231 residues: Ribosomal RNA small subunit methyltransferase nep-1 (231 aa).

Residues Met161, Gly188, Gly193, and 206–211 (ISNYPL) contribute to the S-adenosyl-L-methionine site.

Belongs to the class IV-like SAM-binding methyltransferase superfamily. RNA methyltransferase NEP1 family. As to quaternary structure, homodimer.

The protein resides in the nucleus. Its subcellular location is the nucleolus. It carries out the reaction a pseudouridine in rRNA + S-adenosyl-L-methionine = an N(1)-methylpseudouridine in rRNA + S-adenosyl-L-homocysteine + H(+). Its function is as follows. S-adenosyl-L-methionine-dependent pseudouridine N(1)-methyltransferase that methylates a pseudouridine in 18S rRNA. Involved the biosynthesis of the hypermodified N1-methyl-N3-(3-amino-3-carboxypropyl) pseudouridine (m1acp3-Psi) conserved in eukaryotic 18S rRNA. Also has an essential role in 40S ribosomal subunit biogenesis independent on its methyltransferase activity, facilitating the incorporation of ribosomal protein S19 during the formation of pre-ribosomes. The polypeptide is Ribosomal RNA small subunit methyltransferase nep-1 (Caenorhabditis elegans).